We begin with the raw amino-acid sequence, 393 residues long: FAD-dependent monooxygenase dbaB (393 aa).

Positions 1 to 23 are cleaved as a signal peptide; the sequence is MTRTSPTLPVIILGAGMVGLTLA. Residues E37 and R107 each coordinate FAD. An N-linked (GlcNAc...) asparagine glycan is attached at N128. The active site involves Y221. N233 carries N-linked (GlcNAc...) asparagine glycosylation. D320 contacts FAD.

Belongs to the paxM FAD-dependent monooxygenase family. The cofactor is FAD.

Its pathway is secondary metabolite biosynthesis. FAD-dependent monooxygenase; part of the gene cluster that mediates the biosynthesis of the antibiotic 2,4-dihydroxy-3-methyl-6-(2-oxopropyl)benzaldehyde (DHMBA) and its derivatives. The direct non-reducing polyketide synthase dbaI product is 2,4-dihydroxy-3-methyl-6-(2-oxopropyl)benzaldehyde (DHMBA), produced by condensation of one acetyl-CoA starter unit with 4 malonyl-CoA units and one methylation step. The FAD-dependent monooxygenase dbaH is responsible for the synthesis of yellow pigments derived from the oxidation of DHMBA. The roles of dbaB, C, E and F have still to be determined. In Emericella nidulans (strain FGSC A4 / ATCC 38163 / CBS 112.46 / NRRL 194 / M139) (Aspergillus nidulans), this protein is FAD-dependent monooxygenase dbaB.